Consider the following 628-residue polypeptide: Translation factor GUF1, mitochondrial (628 aa).

In terms of domain architecture, tr-type G spans 27 to 209 (LPSRNFSIIA…AIISRIPPPS (183 aa)). GTP contacts are provided by residues 36 to 43 (AHIDHGKS), 102 to 106 (DTPGH), and 156 to 159 (NKID).

This sequence belongs to the TRAFAC class translation factor GTPase superfamily. Classic translation factor GTPase family. LepA subfamily.

The protein resides in the mitochondrion inner membrane. The catalysed reaction is GTP + H2O = GDP + phosphate + H(+). Its function is as follows. Promotes mitochondrial protein synthesis. May act as a fidelity factor of the translation reaction, by catalyzing a one-codon backward translocation of tRNAs on improperly translocated ribosomes. Binds to mitochondrial ribosomes in a GTP-dependent manner. This is Translation factor GUF1, mitochondrial from Laccaria bicolor (strain S238N-H82 / ATCC MYA-4686) (Bicoloured deceiver).